Here is a 247-residue protein sequence, read N- to C-terminus: MRQKLVIGNWKMHGSLAANAALLEGIQAGAGVARATLAVCAPFPYLAQCQALLNGSKVAWGAQDVSAEARGAFTGEVAASMLGEFGCTYVLVGHSERRTYHGETDQAVAAKALRALEFGIVPVVCVGETLAQREAGETEAVVGRQLQAVLEALTVEQLGRVVLAYEPVWAIGTGKTATSEQAQAVHAFLRGQVAARDAGVAGRMAILYGGSVKPDNAAELFSMTDIDGGLIGGASLKSEDFLAIGNA.

9–11 (NWK) contributes to the substrate binding site. The active-site Electrophile is H94. The active-site Proton acceptor is the E166. Residues G172, S211, and 232–233 (GG) each bind substrate.

Belongs to the triosephosphate isomerase family. Homodimer.

Its subcellular location is the cytoplasm. The catalysed reaction is D-glyceraldehyde 3-phosphate = dihydroxyacetone phosphate. It participates in carbohydrate biosynthesis; gluconeogenesis. It functions in the pathway carbohydrate degradation; glycolysis; D-glyceraldehyde 3-phosphate from glycerone phosphate: step 1/1. In terms of biological role, involved in the gluconeogenesis. Catalyzes stereospecifically the conversion of dihydroxyacetone phosphate (DHAP) to D-glyceraldehyde-3-phosphate (G3P). The protein is Triosephosphate isomerase of Cupriavidus taiwanensis (strain DSM 17343 / BCRC 17206 / CCUG 44338 / CIP 107171 / LMG 19424 / R1) (Ralstonia taiwanensis (strain LMG 19424)).